The sequence spans 87 residues: Kawaguchipeptin peptide (87 aa).

A propeptide spanning residues 1 to 33 (MKNPTLLPKLTAPVERPAVTSSDLKQASSVDAA) is cleaved from the precursor. W34 is lipidated: 3'-prenyl-2',N2-cyclotryptophan; partial. The cyclopeptide (Trp-Pro) cross-link spans 34-44 (WLNGDNNWSTP). At L35 the chain carries D-leucine; partial. W41 carries the 3'-prenyl-2',N2-cyclotryptophan; partial lipid modification. Residues 45 to 51 (FAGVNAA) constitute a propeptide that is removed on maturation. Residue W52 is the site of 3'-prenyl-2',N2-cyclotryptophan; partial attachment. Positions 52 to 62 (WLNGDNNWSTP) form a cross-link, cyclopeptide (Trp-Pro). D-leucine; partial is present on L53. The 3'-prenyl-2',N2-cyclotryptophan; partial moiety is linked to residue W59. The propeptide occupies 63 to 69 (FAGVNAA). A lipid anchor (3'-prenyl-2',N2-cyclotryptophan; partial) is attached at W70. Positions 70–80 (WLNGDNNWSTP) form a cross-link, cyclopeptide (Trp-Pro). Residue L71 is modified to D-leucine; partial. W77 carries the 3'-prenyl-2',N2-cyclotryptophan; partial lipid modification. The propeptide occupies 81 to 87 (FAADGAE).

Kawaguchipeptin A contains a D-Leu and 2 prenylated Trp, whereas kawaguchipeptin B only contains unmodified amino acids. In terms of processing, kawaguchipeptin A is prenylated in vivo. Upon expression in E.coli of the whole operon, Trp residues are prenylated by C-prenyltransferase KgpF. Prenylation by KgpF is likely the last enzymatic step in the biosynthetic maturation of kawaguchipeptin A.

Its function is as follows. Both kawaguchipeptin A and B, which only differ by post-translational modifications, have antibacterial activities, since they inhibit the growth of the Gram-positive bacterium S.aureus at a concentration of 1 ug/mL. The protein is Kawaguchipeptin peptide of Microcystis aeruginosa (strain NIES-88 / KW-MA1-3).